Consider the following 376-residue polypeptide: Eugenol O-methyltransferase (376 aa).

The S-adenosyl-L-methionine site is built by G219, D242, M263, and K276. H280 serves as the catalytic Proton acceptor.

The protein belongs to the class I-like SAM-binding methyltransferase superfamily. Cation-independent O-methyltransferase family. COMT subfamily. As to quaternary structure, homodimer. In terms of tissue distribution, expressed predominantly in root hairs.

The catalysed reaction is (E)-isoeugenol + S-adenosyl-L-methionine = (E)-isomethyleugenol + S-adenosyl-L-homocysteine + H(+). Its function is as follows. O-methyltransferase. Substrate preference is eugenol &gt;&gt; orcinol monomethyl ether &gt; resorcinol monomethyl ether. This is Eugenol O-methyltransferase (EOMT) from Sorghum bicolor (Sorghum).